The chain runs to 66 residues: Cadmium-metallothionein (66 aa).

At S1 the chain carries N-acetylserine. Cd(2+) contacts are provided by C9, C13, C18, C20, C24, C26, C30, C32, C35, C38, C40, C45, C47, C51, C57, C59, C63, and C65.

Belongs to the metallothionein superfamily. Type 2 family.

Its function is as follows. The metallothioneins are involved in the cellular sequestration of toxic metal ions and regulation of essential trace elements. Binds almost exclusively cadmium. The polypeptide is Cadmium-metallothionein (Helix pomatia (Roman snail)).